A 601-amino-acid chain; its full sequence is Elongation factor 4 (601 aa).

The tr-type G domain occupies Glu-5 to Lys-187. Residues Asp-17–Thr-22 and Asn-134–Asp-137 each bind GTP.

The protein belongs to the TRAFAC class translation factor GTPase superfamily. Classic translation factor GTPase family. LepA subfamily.

It is found in the cell inner membrane. The catalysed reaction is GTP + H2O = GDP + phosphate + H(+). Required for accurate and efficient protein synthesis under certain stress conditions. May act as a fidelity factor of the translation reaction, by catalyzing a one-codon backward translocation of tRNAs on improperly translocated ribosomes. Back-translocation proceeds from a post-translocation (POST) complex to a pre-translocation (PRE) complex, thus giving elongation factor G a second chance to translocate the tRNAs correctly. Binds to ribosomes in a GTP-dependent manner. This chain is Elongation factor 4, found in Treponema denticola (strain ATCC 35405 / DSM 14222 / CIP 103919 / JCM 8153 / KCTC 15104).